Consider the following 147-residue polypeptide: Large ribosomal subunit protein uL15 (147 aa).

Basic and acidic residues predominate over residues 1–20 (MTLRLNDLKPADGARTERTR). The segment at 1–61 (MTLRLNDLKP…GFEGGQTPMQ (61 aa)) is disordered. The span at 23 to 33 (RGIGSGLGKTA) shows a compositional bias: gly residues. Residues 34 to 47 (GRGHKGSFARKGGG) are compositionally biased toward basic residues.

This sequence belongs to the universal ribosomal protein uL15 family. Part of the 50S ribosomal subunit.

Functionally, binds to the 23S rRNA. The chain is Large ribosomal subunit protein uL15 from Xanthomonas axonopodis pv. citri (strain 306).